Consider the following 321-residue polypeptide: Mitochondrial thiamine pyrophosphate carrier 1 (321 aa).

Solcar repeat units follow at residues 12–110 (GSRQ…ISQM), 121–207 (PSSA…LKPV), and 216–311 (PLGS…AMGI). The next 6 membrane-spanning stretches (helical) occupy residues 17–38 (VVVA…LDVI), 91–107 (LLYL…YTNI), 127–147 (FISG…LDLL), 182–199 (GLGA…LFFA), 213–231 (LPLP…ASVV), and 286–303 (GLTV…VTMW).

Belongs to the mitochondrial carrier (TC 2.A.29) family.

The protein localises to the mitochondrion inner membrane. Mitochondrial transporter that mediates uptake of thiamine pyrophosphate (ThPP) into mitochondria. This chain is Mitochondrial thiamine pyrophosphate carrier 1 (TPC1), found in Phaeosphaeria nodorum (strain SN15 / ATCC MYA-4574 / FGSC 10173) (Glume blotch fungus).